Here is a 189-residue protein sequence, read N- to C-terminus: Interferon alpha-12 (189 aa).

The N-terminal stretch at 1–23 (MARLCAFLMTLLVMSYWSTCSLG) is a signal peptide. 2 disulfides stabilise this stretch: Cys-24-Cys-122 and Cys-52-Cys-162. N-linked (GlcNAc...) asparagine glycosylation occurs at Asn-101.

This sequence belongs to the alpha/beta interferon family.

It is found in the secreted. Produced by macrophages, IFN-alpha have antiviral activities. Interferon stimulates the production of two enzymes: a protein kinase and an oligoadenylate synthetase. This is Interferon alpha-12 (Ifna12) from Mus musculus (Mouse).